The primary structure comprises 357 residues: Zinc finger protein 830 (357 aa).

The C2H2-type zinc finger occupies 47–69; the sequence is CVVCNIQIKSELLWPAHILGKQH. 3 disordered regions span residues 98–126, 157–194, and 231–255; these read RKGS…TKLP, DDDE…ADRL, and ALPE…PKDQ. The segment covering 99-115 has biased composition (basic and acidic residues); sequence KGSEPENQESKRIKGTE. Residues 157-168 are compositionally biased toward acidic residues; it reads DDDEVEGEEYEN. The segment covering 242 to 255 has biased composition (basic and acidic residues); sequence ADAKVRKVDAPKDQ. A coiled-coil region spans residues 279–325; the sequence is AEEDEEGRLDRQIDEIDEQIECYRRVEHLRDLKDTLQDAKMEVLKSK.

It localises to the nucleus. Its subcellular location is the chromosome. The protein localises to the nucleus speckle. In terms of biological role, may act as an important regulator of the cell cycle that participates in the maintenance of genome integrity. This chain is Zinc finger protein 830, found in Xenopus tropicalis (Western clawed frog).